Consider the following 235-residue polypeptide: 5'-methylthioadenosine/S-adenosylhomocysteine nucleosidase (235 aa).

Catalysis depends on Glu-12, which acts as the Proton acceptor. Substrate is bound by residues Gly-78, Met-153, and 174–175 (ME). Asp-198 functions as the Proton donor in the catalytic mechanism.

It belongs to the PNP/UDP phosphorylase family. MtnN subfamily.

It carries out the reaction S-adenosyl-L-homocysteine + H2O = S-(5-deoxy-D-ribos-5-yl)-L-homocysteine + adenine. It catalyses the reaction S-methyl-5'-thioadenosine + H2O = 5-(methylsulfanyl)-D-ribose + adenine. The enzyme catalyses 5'-deoxyadenosine + H2O = 5-deoxy-D-ribose + adenine. Its pathway is amino-acid biosynthesis; L-methionine biosynthesis via salvage pathway; S-methyl-5-thio-alpha-D-ribose 1-phosphate from S-methyl-5'-thioadenosine (hydrolase route): step 1/2. Its function is as follows. Catalyzes the irreversible cleavage of the glycosidic bond in both 5'-methylthioadenosine (MTA) and S-adenosylhomocysteine (SAH/AdoHcy) to adenine and the corresponding thioribose, 5'-methylthioribose and S-ribosylhomocysteine, respectively. Also cleaves 5'-deoxyadenosine, a toxic by-product of radical S-adenosylmethionine (SAM) enzymes, into 5-deoxyribose and adenine. The sequence is that of 5'-methylthioadenosine/S-adenosylhomocysteine nucleosidase from Pseudoalteromonas translucida (strain TAC 125).